A 535-amino-acid polypeptide reads, in one-letter code: Succinate-semialdehyde dehydrogenase, mitochondrial (535 aa).

The N-terminal 47 residues, 1–47 (MATCFWLRSCGARRLGSTFPGCRLRPRAGGLVPASGPAPGPAQLRCY), are a transit peptide targeting the mitochondrion. At Lys-126 the chain carries N6-acetyllysine; alternate. Lys-126 is modified (N6-succinyllysine; alternate). An N6-succinyllysine mark is found at Lys-135 and Lys-184. NAD(+) is bound by residues Arg-213 and 228-231 (KPAE). Arg-213 serves as a coordination point for substrate. Residue Lys-265 is modified to N6-acetyllysine; alternate. Residue Lys-265 is modified to N6-succinyllysine; alternate. Residue 284-289 (GSTTTG) participates in NAD(+) binding. Glu-306 serves as the catalytic Proton acceptor. Arg-334 provides a ligand contact to substrate. Cys-340 functions as the Nucleophile in the catalytic mechanism. An intrachain disulfide couples Cys-340 to Cys-342. Lys-365 carries the post-translational modification N6-acetyllysine. Lys-402 is modified (N6-succinyllysine). Lys-411 is modified (N6-acetyllysine). Ser-498 contacts substrate. The residue at position 499 (Ser-499) is a Phosphoserine.

The protein belongs to the aldehyde dehydrogenase family. As to quaternary structure, homotetramer.

It localises to the mitochondrion. It catalyses the reaction succinate semialdehyde + NAD(+) + H2O = succinate + NADH + 2 H(+). It participates in amino-acid degradation; 4-aminobutanoate degradation. Redox-regulated. Inhibited under oxydizing conditions. Its function is as follows. Catalyzes one step in the degradation of the inhibitory neurotransmitter gamma-aminobutyric acid (GABA). This Hylobates lar (Lar gibbon) protein is Succinate-semialdehyde dehydrogenase, mitochondrial (ALDH5A1).